Here is a 227-residue protein sequence, read N- to C-terminus: 2-C-methyl-D-erythritol 4-phosphate cytidylyltransferase (227 aa).

The protein belongs to the IspD/TarI cytidylyltransferase family. IspD subfamily.

The enzyme catalyses 2-C-methyl-D-erythritol 4-phosphate + CTP + H(+) = 4-CDP-2-C-methyl-D-erythritol + diphosphate. It functions in the pathway isoprenoid biosynthesis; isopentenyl diphosphate biosynthesis via DXP pathway; isopentenyl diphosphate from 1-deoxy-D-xylulose 5-phosphate: step 2/6. Functionally, catalyzes the formation of 4-diphosphocytidyl-2-C-methyl-D-erythritol from CTP and 2-C-methyl-D-erythritol 4-phosphate (MEP). The polypeptide is 2-C-methyl-D-erythritol 4-phosphate cytidylyltransferase (Deinococcus geothermalis (strain DSM 11300 / CIP 105573 / AG-3a)).